A 130-amino-acid chain; its full sequence is Iron-sulfur cluster insertion protein ErpA (130 aa).

Cys46, Cys116, and Cys118 together coordinate iron-sulfur cluster.

This sequence belongs to the HesB/IscA family. In terms of assembly, homodimer. The cofactor is iron-sulfur cluster.

Its function is as follows. Required for insertion of 4Fe-4S clusters for at least IspG. The polypeptide is Iron-sulfur cluster insertion protein ErpA (Legionella pneumophila (strain Paris)).